Reading from the N-terminus, the 705-residue chain is Fatty acid oxidation complex subunit alpha (705 aa).

An enoyl-CoA hydratase region spans residues 1–190 (MSEQKAFNLK…KLGVVDACVP (190 aa)). The interval 308-705 (SKVGMVGVLG…AGEGRRFYDN (398 aa)) is 3-hydroxyacyl-CoA dehydrogenase.

It in the N-terminal section; belongs to the enoyl-CoA hydratase/isomerase family. This sequence in the central section; belongs to the 3-hydroxyacyl-CoA dehydrogenase family. Heterotetramer of two alpha chains (FadJ) and two beta chains (FadI).

The protein localises to the cytoplasm. It carries out the reaction a (3S)-3-hydroxyacyl-CoA = a (2E)-enoyl-CoA + H2O. The enzyme catalyses a 4-saturated-(3S)-3-hydroxyacyl-CoA = a (3E)-enoyl-CoA + H2O. The catalysed reaction is a (3S)-3-hydroxyacyl-CoA + NAD(+) = a 3-oxoacyl-CoA + NADH + H(+). It catalyses the reaction (3S)-3-hydroxybutanoyl-CoA = (3R)-3-hydroxybutanoyl-CoA. Its pathway is lipid metabolism; fatty acid beta-oxidation. Functionally, catalyzes the formation of a hydroxyacyl-CoA by addition of water on enoyl-CoA. Also exhibits 3-hydroxyacyl-CoA epimerase and 3-hydroxyacyl-CoA dehydrogenase activities. This Vibrio vulnificus (strain CMCP6) protein is Fatty acid oxidation complex subunit alpha.